Reading from the N-terminus, the 172-residue chain is Translationally-controlled tumor protein homolog (172 aa).

Positions 1-172 (MIIFKDLLTG…FKHGLDEEKV (172 aa)) constitute a TCTP domain.

It belongs to the TCTP family. As to expression, expressed by the venom gland.

The protein resides in the secreted. Functionally, venom protein that causes edema, enhances vascular permeability and is likely related to the inflammatory activity of the venom. The chain is Translationally-controlled tumor protein homolog from Loxosceles intermedia (Brown spider).